We begin with the raw amino-acid sequence, 827 residues long: SID1 transmembrane family member 1 (827 aa).

The first 19 residues, 1-19, serve as a signal peptide directing secretion; that stretch reads MLDCLRLALLCALPWLLRA. Residues 20-309 lie on the Extracellular side of the membrane; it reads AVPGHQEEPL…SIKESVYVKS (290 aa). Residues Asn-67, Asn-83, Asn-136, and Asn-282 are each glycosylated (N-linked (GlcNAc...) asparagine). The helical transmembrane segment at 310–330 threads the bilayer; that stretch reads SLFSIFVFLSFYLGCLLVVLV. Residues 331-442 are Cytoplasmic-facing; it reads HHVRFQRKSI…DRRIVSKKYK (112 aa). The tract at residues 344–409 is disordered; it reads FGSSDGSGNM…VEESDFDTMP (66 aa). The span at 375–386 shows a compositional bias: low complexity; the sequence is SSSSPGRQMSSS. A compositionally biased stretch (acidic residues) spans 398–409; that stretch reads SSVEESDFDTMP. The helical transmembrane segment at 443–463 threads the bilayer; it reads IYFWNIITIAVFYALPVMQLV. Residues 464–494 lie on the Extracellular side of the membrane; it reads ITYQTVVNVTGNQDICYYNFLCAHPLGVLSA. N-linked (GlcNAc...) asparagine glycosylation occurs at Asn-471. The helical transmembrane segment at 495–515 threads the bilayer; it reads FNNILSNLGHVLLGFLFLLIV. Residues 516–541 are Cytoplasmic-facing; sequence LRRDLLHRRALEAKDIFAMEYGIPKH. Residues 542–562 form a helical membrane-spanning segment; that stretch reads FGLFYAMGIALMMEGVLSACY. Over 563 to 572 the chain is Extracellular; sequence HVCPNYSNFQ. Asn-567 carries an N-linked (GlcNAc...) asparagine glycan. A helical transmembrane segment spans residues 573–590; it reads FDTSFMYMIAGLCMLKLY. The Cytoplasmic segment spans residues 591–600; the sequence is QTRHPDINAS. A helical transmembrane segment spans residues 601-621; the sequence is AYSAYASFAVVITLTVLGVVF. The Extracellular segment spans residues 622–626; sequence GKNDV. A helical transmembrane segment spans residues 627-647; it reads WFWIIFSAIHILSSLALSTQI. Topologically, residues 648-683 are cytoplasmic; sequence YYMGRFKIDLGIFRRAAMVFYTDCIQQCSRPLYMDR. A helical transmembrane segment spans residues 684 to 704; it reads MVLLIVGNLVNWSFAFFGLIY. The Extracellular segment spans residues 705 to 710; the sequence is RPRDFA. Residues 711 to 731 form a helical membrane-spanning segment; the sequence is SYMLGIFICNLLLYLAFYIIM. Topologically, residues 732 to 741 are cytoplasmic; it reads KLRSSEKVLP. The helical transmembrane segment at 742-762 threads the bilayer; the sequence is LPVFCIAATAVVWAAALYFFF. The Extracellular segment spans residues 763-791; sequence QNLSSWEGTPAESREKNRECVLLDFFDDH. A glycan (N-linked (GlcNAc...) asparagine) is linked at Asn-764. The chain crosses the membrane as a helical span at residues 792–812; sequence DIWHFLSATALFFSFLVLLTL. At 813–827 the chain is on the cytoplasmic side; sequence DDDLDVVRRDQIPVF.

The protein belongs to the SID1 family.

It localises to the membrane. Its function is as follows. In vitro binds long double-stranded RNA (dsRNA) (500 and 700 base pairs), but not dsRNA shorter than 300 bp. Not involved in RNA autophagy, a process in which RNA is directly imported into lysosomes in an ATP-dependent manner, and degraded. This Mus musculus (Mouse) protein is SID1 transmembrane family member 1 (Sidt1).